We begin with the raw amino-acid sequence, 181 residues long: Oligoribonuclease (181 aa).

Residues 8–171 (LIWIDMEMTG…ADIYDSIEEL (164 aa)) form the Exonuclease domain. Tyr-129 is a catalytic residue.

Belongs to the oligoribonuclease family.

Its subcellular location is the cytoplasm. Its function is as follows. 3'-to-5' exoribonuclease specific for small oligoribonucleotides. In Nitrosomonas eutropha (strain DSM 101675 / C91 / Nm57), this protein is Oligoribonuclease.